A 594-amino-acid chain; its full sequence is Protein HOTHEAD (594 aa).

The N-terminal stretch at 1-19 (MALKLFLFALLLCLPTSLS) is a signal peptide. 64–91 (DYIVIGGGTAGCPLAATLSQNFSVLVLE) contributes to the FAD binding site. The active-site Proton acceptor is the His-529.

It belongs to the GMC oxidoreductase family. The cofactor is FAD. In terms of tissue distribution, expressed in roots, leaves, stems, inflorescences and siliques. Found not only in epidermis but also in all sub-epidermal cell layers.

In terms of biological role, probable FAD-dependent enzyme. Involved in regulating post-genital organ fusion. Required to limit cellular interactions between contacting epidermal cells during floral development. The protein is Protein HOTHEAD (HTH) of Arabidopsis thaliana (Mouse-ear cress).